A 222-amino-acid chain; its full sequence is Large ribosomal subunit protein bL25 (222 aa).

It belongs to the bacterial ribosomal protein bL25 family. CTC subfamily. Part of the 50S ribosomal subunit; part of the 5S rRNA/L5/L18/L25 subcomplex. Contacts the 5S rRNA. Binds to the 5S rRNA independently of L5 and L18.

Its function is as follows. This is one of the proteins that binds to the 5S RNA in the ribosome where it forms part of the central protuberance. In Ruthia magnifica subsp. Calyptogena magnifica, this protein is Large ribosomal subunit protein bL25.